A 660-amino-acid polypeptide reads, in one-letter code: UvrABC system protein B (660 aa).

Residues 26–414 (KKVLAGQRHQ…PEMTEQIIRP (389 aa)) enclose the Helicase ATP-binding domain. 39–46 (GATGTGKT) is a binding site for ATP. The short motif at 92–115 (YYDYYQPEAYVPSTDTFIEKDASI) is the Beta-hairpin element. The region spanning 430 to 596 (QIDNLIEEIR…TIRKEVRDVI (167 aa)) is the Helicase C-terminal domain. A UVR domain is found at 624-659 (EKVIEQMENEMKQAAKDLDFEKAAELRDVILELKAE).

It belongs to the UvrB family. In terms of assembly, forms a heterotetramer with UvrA during the search for lesions. Interacts with UvrC in an incision complex.

Its subcellular location is the cytoplasm. Functionally, the UvrABC repair system catalyzes the recognition and processing of DNA lesions. A damage recognition complex composed of 2 UvrA and 2 UvrB subunits scans DNA for abnormalities. Upon binding of the UvrA(2)B(2) complex to a putative damaged site, the DNA wraps around one UvrB monomer. DNA wrap is dependent on ATP binding by UvrB and probably causes local melting of the DNA helix, facilitating insertion of UvrB beta-hairpin between the DNA strands. Then UvrB probes one DNA strand for the presence of a lesion. If a lesion is found the UvrA subunits dissociate and the UvrB-DNA preincision complex is formed. This complex is subsequently bound by UvrC and the second UvrB is released. If no lesion is found, the DNA wraps around the other UvrB subunit that will check the other stand for damage. This chain is UvrABC system protein B, found in Oceanobacillus iheyensis (strain DSM 14371 / CIP 107618 / JCM 11309 / KCTC 3954 / HTE831).